The following is a 1025-amino-acid chain: Multidrug resistance protein MdtC (1025 aa).

The next 12 helical transmembrane spans lie at 3–23 (FFAL…AITL), 333–353 (EVEQ…FLFL), 360–380 (IIPA…MYLC), 387–407 (LSLM…IVVL), 431–451 (VGFT…PLLL), 463–483 (FAVT…TLTP), 528–548 (LVGV…ISIP), 853–873 (VILI…LYES), 875–895 (VHPL…LLAL), 897–917 (LFNA…IGIV), 953–973 (PIMM…LSGG), and 984–1004 (ITIV…TPVV).

Belongs to the resistance-nodulation-cell division (RND) (TC 2.A.6) family. MdtC subfamily. As to quaternary structure, part of a tripartite efflux system composed of MdtA, MdtB and MdtC. MdtC forms a heteromultimer with MdtB.

Its subcellular location is the cell inner membrane. The MdtABC tripartite complex confers resistance against novobiocin and deoxycholate. The protein is Multidrug resistance protein MdtC of Escherichia coli (strain ATCC 8739 / DSM 1576 / NBRC 3972 / NCIMB 8545 / WDCM 00012 / Crooks).